Here is a 338-residue protein sequence, read N- to C-terminus: (2Z,6E)-hedycaryol synthase (338 aa).

Residues D82 and E87 each contribute to the Mg(2+) site. The DDXXXE motif motif lies at 82-87 (DDQIDE). R175 lines the substrate pocket. Mg(2+)-binding residues include N221 and S225. Positions 221–229 (NDVFSVERE) match the NXXXSXXXE motif motif. R228 provides a ligand contact to substrate. Position 229 (E229) interacts with Mg(2+).

This sequence belongs to the terpene synthase family. Homodimer. Mg(2+) serves as cofactor.

It carries out the reaction (2E,6E)-farnesyl diphosphate + H2O = (2Z,6E)-hedycaryol + diphosphate. The protein operates within secondary metabolite biosynthesis; terpenoid biosynthesis. Functionally, catalyzes the conversion of (2E,6E)-farnesyl diphosphate (FPP) into (2Z,6E)-hedycaryol via a 1,11-cyclization. This is (2Z,6E)-hedycaryol synthase from Kitasatospora setae (strain ATCC 33774 / DSM 43861 / JCM 3304 / KCC A-0304 / NBRC 14216 / KM-6054) (Streptomyces setae).